Here is a 243-residue protein sequence, read N- to C-terminus: Small ribosomal subunit protein mS23 (243 aa).

The protein belongs to the mitochondrion-specific ribosomal protein mS23 family. As to quaternary structure, component of the mitochondrial small ribosomal subunit.

The protein resides in the mitochondrion. The chain is Small ribosomal subunit protein mS23 (rsm25) from Emericella nidulans (strain FGSC A4 / ATCC 38163 / CBS 112.46 / NRRL 194 / M139) (Aspergillus nidulans).